The sequence spans 35 residues: MSDIN-like toxin proprotein 8 (35 aa).

A propeptide spanning residues 1–10 (MSDINATRLP) is cleaved from the precursor. A cross-link (cyclopeptide (Phe-Pro)) is located at residues 11–18 (FVFVASPP). A propeptide spanning residues 19 to 35 (CVGDDIAMVLTRGENLC) is cleaved from the precursor.

Belongs to the MSDIN fungal toxin family. Processed by the macrocyclase-peptidase enzyme POPB to yield a toxic cyclic octapeptide. POPB first removes 10 residues from the N-terminus. Conformational trapping of the remaining peptide forces the enzyme to release this intermediate rather than proceed to macrocyclization. The enzyme rebinds the remaining peptide in a different conformation and catalyzes macrocyclization of the N-terminal 8 residues. In terms of tissue distribution, expressed in basidiocarps.

In terms of biological role, probable toxin that belongs to the MSDIN-like toxin family responsible for a large number of food poisoning cases and deaths. The chain is MSDIN-like toxin proprotein 8 from Amanita exitialis (Guangzhou destroying angel).